A 114-amino-acid polypeptide reads, in one-letter code: Ribonuclease U2 (114 aa).

Cystine bridges form between cysteine 1-cysteine 54, cysteine 9-cysteine 113, and cysteine 55-cysteine 96. Ca(2+)-binding residues include aspartate 29, valine 30, alanine 31, asparagine 32, aspartate 37, and tyrosine 39. 39–49 serves as a coordination point for substrate; the sequence is YPHQYYDEASE. Histidine 41 is a catalytic residue. Catalysis depends on glutamate 62, which acts as the Proton acceptor. Position 85 (arginine 85) interacts with substrate. The active-site Proton donor is histidine 101. Substrate is bound at residue 108-110; it reads DGF.

Belongs to the ribonuclease U2 family.

It carries out the reaction [RNA] containing adenosine + H2O = an [RNA fragment]-3'-adenosine-3'-phosphate + a 5'-hydroxy-ribonucleotide-3'-[RNA fragment].. The enzyme catalyses [RNA] containing guanosine + H2O = an [RNA fragment]-3'-guanosine-3'-phosphate + a 5'-hydroxy-ribonucleotide-3'-[RNA fragment].. The chain is Ribonuclease U2 (RNU2) from Ustilago sphaerogena (Smut fungus).